The chain runs to 275 residues: 2,3,4,5-tetrahydropyridine-2,6-dicarboxylate N-succinyltransferase (275 aa).

Belongs to the transferase hexapeptide repeat family.

The protein localises to the cytoplasm. The catalysed reaction is (S)-2,3,4,5-tetrahydrodipicolinate + succinyl-CoA + H2O = (S)-2-succinylamino-6-oxoheptanedioate + CoA. The protein operates within amino-acid biosynthesis; L-lysine biosynthesis via DAP pathway; LL-2,6-diaminopimelate from (S)-tetrahydrodipicolinate (succinylase route): step 1/3. In Burkholderia multivorans (strain ATCC 17616 / 249), this protein is 2,3,4,5-tetrahydropyridine-2,6-dicarboxylate N-succinyltransferase.